The following is a 365-amino-acid chain: DNA replication and repair protein RecF (365 aa).

Position 30–37 (30–37 (GLNGSGKT)) interacts with ATP.

Belongs to the RecF family.

The protein localises to the cytoplasm. The RecF protein is involved in DNA metabolism; it is required for DNA replication and normal SOS inducibility. RecF binds preferentially to single-stranded, linear DNA. It also seems to bind ATP. This chain is DNA replication and repair protein RecF, found in Cellvibrio japonicus (strain Ueda107) (Pseudomonas fluorescens subsp. cellulosa).